The primary structure comprises 214 residues: Thymidylate kinase (214 aa).

10–17 (GPDGAGKT) provides a ligand contact to ATP.

This sequence belongs to the thymidylate kinase family.

It carries out the reaction dTMP + ATP = dTDP + ADP. Functionally, phosphorylation of dTMP to form dTDP in both de novo and salvage pathways of dTTP synthesis. The sequence is that of Thymidylate kinase from Latilactobacillus sakei subsp. sakei (strain 23K) (Lactobacillus sakei subsp. sakei).